The chain runs to 159 residues: MGDNAEQAVQTDIDIAEILARIPHRYPFLLVDRAEDYNPHQSIVGIKCVTINEPFFQGHFPGNPVMPGVLIIEALAQTGAVLMSKSLEVDTEGKTIFFMSVDNARFRNPVRPGDVIRMEVEVLRARSSIFKFKGVAKVGDKVAAEAEFAAMVVETGPKA.

His-59 is an active-site residue.

This sequence belongs to the thioester dehydratase family. FabZ subfamily.

The protein localises to the cytoplasm. The catalysed reaction is a (3R)-hydroxyacyl-[ACP] = a (2E)-enoyl-[ACP] + H2O. Its function is as follows. Involved in unsaturated fatty acids biosynthesis. Catalyzes the dehydration of short chain beta-hydroxyacyl-ACPs and long chain saturated and unsaturated beta-hydroxyacyl-ACPs. The polypeptide is 3-hydroxyacyl-[acyl-carrier-protein] dehydratase FabZ (Caulobacter vibrioides (strain ATCC 19089 / CIP 103742 / CB 15) (Caulobacter crescentus)).